We begin with the raw amino-acid sequence, 288 residues long: Energy-coupling factor transporter ATP-binding protein EcfA2 (288 aa).

In terms of domain architecture, ABC transporter spans 3–243 (IVFEAVSHIY…RAELEAIGLG (241 aa)). ATP is bound at residue 40 to 47 (GPTGSGKS).

Belongs to the ABC transporter superfamily. Energy-coupling factor EcfA family. Forms a stable energy-coupling factor (ECF) transporter complex composed of 2 membrane-embedded substrate-binding proteins (S component), 2 ATP-binding proteins (A component) and 2 transmembrane proteins (T component).

Its subcellular location is the cell membrane. Its function is as follows. ATP-binding (A) component of a common energy-coupling factor (ECF) ABC-transporter complex. Unlike classic ABC transporters this ECF transporter provides the energy necessary to transport a number of different substrates. The sequence is that of Energy-coupling factor transporter ATP-binding protein EcfA2 from Symbiobacterium thermophilum (strain DSM 24528 / JCM 14929 / IAM 14863 / T).